We begin with the raw amino-acid sequence, 387 residues long: MEVLAAETISQQERLQAIAEKRRRQAEVENRRRQLEDDRRQLQHLKSKALRERWLLEGTPSSASEGDEDMRKQMQEDEQKARLLEESIARLEKEIEELENADTLPAPVKETQVAPSPGPVVPAPCPAQEDRKAEVDLNAQQTPVGTPKEKRISNTPMRMVEGSTMMNAAMYSVEITVEKDKVTGETRVLSSATVLPREHPPQGIKVYEDETKVVHAVDGTAENGIHPLSSSEVDELIHKADEVTLSEAGSAAAPETRGPSEEVVRTTPSRREITGVQAQPGEATSGPPGIQPGQEPPVTMIFMGYQNVEDEAETQKVLGLQDTITAELVVIEDAAEPKEPAPPNGSAAEPLATEGSREENQVGPEAPASDPQDLDMKKQRCKCCSIM.

The residue at position 1 (methionine 1) is an N-acetylmethionine. A coiled-coil region spans residues glutamate 7–leucine 104. Disordered stretches follow at residues arginine 22–glutamate 78 and leucine 98–alanine 133. Basic and acidic residues-rich tracts occupy residues glutamine 25 to glutamine 41 and aspartate 69 to glutamate 78. Phosphoserine is present on serine 116. The segment covering serine 116–cysteine 125 has biased composition (pro residues). A phosphothreonine mark is found at threonine 142 and threonine 146. Serine 163 carries the post-translational modification Phosphoserine. Residue threonine 244 is modified to Phosphothreonine. Phosphoserine is present on serine 246. Disordered regions lie at residues serine 246–proline 297 and alanine 334–lysine 378. The span at glycine 258–isoleucine 273 shows a compositional bias: basic and acidic residues. The span at glycine 286–proline 297 shows a compositional bias: low complexity. Residues serine 346 and serine 369 each carry the phosphoserine modification. S-palmitoyl cysteine attachment occurs at residues cysteine 381 and cysteine 383. Cysteine 384 carries the post-translational modification Cysteine methyl ester. Residue cysteine 384 is the site of S-farnesyl cysteine attachment. Positions serine 385 to methionine 387 are cleaved as a propeptide — removed in mature form.

The protein belongs to the paralemmin family. In terms of assembly, interacts with dopamine receptor DRD3. Post-translationally, phosphorylated.

It localises to the cell membrane. It is found in the cell projection. Its subcellular location is the filopodium membrane. The protein resides in the axon. The protein localises to the dendrite. It localises to the dendritic spine. It is found in the basolateral cell membrane. Its subcellular location is the apicolateral cell membrane. Functionally, involved in plasma membrane dynamics and cell process formation. Necessary for axonal and dendritic filopodia induction, for dendritic spine maturation and synapse formation in a palmitoylation-dependent manner. The sequence is that of Paralemmin-1 (PALM) from Sus scrofa (Pig).